The following is a 187-amino-acid chain: Elongation factor P (187 aa).

It belongs to the elongation factor P family.

The protein localises to the cytoplasm. The protein operates within protein biosynthesis; polypeptide chain elongation. Its function is as follows. Involved in peptide bond synthesis. Stimulates efficient translation and peptide-bond synthesis on native or reconstituted 70S ribosomes in vitro. Probably functions indirectly by altering the affinity of the ribosome for aminoacyl-tRNA, thus increasing their reactivity as acceptors for peptidyl transferase. This is Elongation factor P from Pseudarthrobacter chlorophenolicus (strain ATCC 700700 / DSM 12829 / CIP 107037 / JCM 12360 / KCTC 9906 / NCIMB 13794 / A6) (Arthrobacter chlorophenolicus).